The sequence spans 187 residues: MLEVLPADVAELVEQGGVIAYPTEAVYGLGCDPDNDDAIERLLEIKLRPWQKGLILVAGDYQQLLPYIDESQLSAEQLAFVHSKWPGPFTFIMPVKPGLSNLLSGSFDSIAVRVTAHEGVKALCAAINKPIVSTSANLTGQDPALSGAAVKQQFEGIIAGLVIGDLGIQASPSTIIDAKSGQVIRKG.

The 185-residue stretch at 3 to 187 (EVLPADVAEL…AKSGQVIRKG (185 aa)) folds into the YrdC-like domain.

This sequence belongs to the SUA5 family. TsaC subfamily.

The protein localises to the cytoplasm. It catalyses the reaction L-threonine + hydrogencarbonate + ATP = L-threonylcarbamoyladenylate + diphosphate + H2O. Required for the formation of a threonylcarbamoyl group on adenosine at position 37 (t(6)A37) in tRNAs that read codons beginning with adenine. Catalyzes the conversion of L-threonine, HCO(3)(-)/CO(2) and ATP to give threonylcarbamoyl-AMP (TC-AMP) as the acyladenylate intermediate, with the release of diphosphate. The sequence is that of Threonylcarbamoyl-AMP synthase from Shewanella halifaxensis (strain HAW-EB4).